Here is a 224-residue protein sequence, read N- to C-terminus: UPF0758 protein PSHAa2643 (224 aa).

The 123-residue stretch at 102–224 (IFNSPNAVYD…CVSFAERGLI (123 aa)) folds into the MPN domain. Zn(2+) is bound by residues histidine 173, histidine 175, and aspartate 186. The short motif at 173-186 (HNHPSGIAEPSQAD) is the JAMM motif element.

This sequence belongs to the UPF0758 family.

The protein is UPF0758 protein PSHAa2643 of Pseudoalteromonas translucida (strain TAC 125).